The primary structure comprises 514 residues: UDP-N-acetylmuramate--L-alanine ligase (514 aa).

127–133 (GTHGKTT) is an ATP binding site. Positions 495 to 505 (IGGTIPDIPGG) are enriched in low complexity. A disordered region spans residues 495-514 (IGGTIPDIPGGSTPDASAAG).

Belongs to the MurCDEF family.

Its subcellular location is the cytoplasm. The enzyme catalyses UDP-N-acetyl-alpha-D-muramate + L-alanine + ATP = UDP-N-acetyl-alpha-D-muramoyl-L-alanine + ADP + phosphate + H(+). It functions in the pathway cell wall biogenesis; peptidoglycan biosynthesis. Cell wall formation. This Salinispora tropica (strain ATCC BAA-916 / DSM 44818 / JCM 13857 / NBRC 105044 / CNB-440) protein is UDP-N-acetylmuramate--L-alanine ligase.